Consider the following 638-residue polypeptide: Phosphomethylpyrimidine synthase (638 aa).

Substrate-binding positions include Asn-243, Met-272, Tyr-301, His-337, 357-359, 398-401, and Glu-437; these read SRG and DGLR. A Zn(2+)-binding site is contributed by His-441. Tyr-464 is a binding site for substrate. His-505 lines the Zn(2+) pocket. Positions 585, 588, and 593 each coordinate [4Fe-4S] cluster.

It belongs to the ThiC family. Homodimer. [4Fe-4S] cluster serves as cofactor.

It carries out the reaction 5-amino-1-(5-phospho-beta-D-ribosyl)imidazole + S-adenosyl-L-methionine = 4-amino-2-methyl-5-(phosphooxymethyl)pyrimidine + CO + 5'-deoxyadenosine + formate + L-methionine + 3 H(+). It participates in cofactor biosynthesis; thiamine diphosphate biosynthesis. In terms of biological role, catalyzes the synthesis of the hydroxymethylpyrimidine phosphate (HMP-P) moiety of thiamine from aminoimidazole ribotide (AIR) in a radical S-adenosyl-L-methionine (SAM)-dependent reaction. The sequence is that of Phosphomethylpyrimidine synthase from Dechloromonas aromatica (strain RCB).